We begin with the raw amino-acid sequence, 377 residues long: Carboxynorspermidine/carboxyspermidine decarboxylase (377 aa).

Lysine 41 is modified (N6-(pyridoxal phosphate)lysine). The substrate site is built by glutamate 238 and aspartate 274.

It belongs to the Orn/Lys/Arg decarboxylase class-II family. NspC subfamily. Homodimer. Pyridoxal 5'-phosphate is required as a cofactor.

The protein resides in the cytoplasm. It carries out the reaction carboxynorspermidine + H(+) = norspermidine + CO2. The catalysed reaction is carboxyspermidine + H(+) = spermidine + CO2. Dithiothreitol greatly stimulates activity, maximum stimulation being at 5-20 mM dithiothreitol concentration. Fe(3+), Fe(2+) and Mn(2+) severely inhibit activity (88%, 82% and 50%, respectively), whereas Zn(2+) has a slightly inhibitory effect (23%) and Mg(2+), Ca(2+), Cu(2+) and Cu(+) have no effect. Catalyzes the decarboxylation of carboxynorspermidine and carboxyspermidine. 2,3-diaminopropionic acid, 2,4-diaminobutyric acid, L-ornithine or L-lysine cannot serve as substrates. The polypeptide is Carboxynorspermidine/carboxyspermidine decarboxylase (Vibrio alginolyticus).